The sequence spans 294 residues: 4-hydroxy-tetrahydrodipicolinate synthase (294 aa).

Thr47 provides a ligand contact to pyruvate. Tyr135 functions as the Proton donor/acceptor in the catalytic mechanism. The active-site Schiff-base intermediate with substrate is the Lys164. Val206 provides a ligand contact to pyruvate.

It belongs to the DapA family. In terms of assembly, homotetramer; dimer of dimers.

It is found in the cytoplasm. It catalyses the reaction L-aspartate 4-semialdehyde + pyruvate = (2S,4S)-4-hydroxy-2,3,4,5-tetrahydrodipicolinate + H2O + H(+). It participates in amino-acid biosynthesis; L-lysine biosynthesis via DAP pathway; (S)-tetrahydrodipicolinate from L-aspartate: step 3/4. Its function is as follows. Catalyzes the condensation of (S)-aspartate-beta-semialdehyde [(S)-ASA] and pyruvate to 4-hydroxy-tetrahydrodipicolinate (HTPA). This is 4-hydroxy-tetrahydrodipicolinate synthase from Lachnoclostridium phytofermentans (strain ATCC 700394 / DSM 18823 / ISDg) (Clostridium phytofermentans).